We begin with the raw amino-acid sequence, 307 residues long: Myeloid-associated differentiation marker-like protein 2 (307 aa).

MARVEL domains follow at residues 17-154 and 159-303; these read AVTS…ARPG and YMAT…RIRF. Transmembrane regions (helical) follow at residues 53 to 73, 90 to 110, 129 to 149, 163 to 183, 198 to 218, 232 to 252, and 278 to 298; these read FCMA…ACEF, AFAM…PLYF, LAAS…VALT, VSGL…GALV, VAVY…SVMG, IVYT…WPVF, and LVVA…LAYS.

The protein belongs to the MAL family.

The protein resides in the membrane. The sequence is that of Myeloid-associated differentiation marker-like protein 2 (Myadml2) from Mus musculus (Mouse).